Reading from the N-terminus, the 225-residue chain is DNA repair and recombination protein RadB (225 aa).

Belongs to the eukaryotic RecA-like protein family. RadB subfamily.

Its function is as follows. Involved in DNA repair and in homologous recombination. May regulate the cleavage reactions of the branch-structured DNA. Has a very weak ATPase activity that is not stimulated by DNA. Binds DNA but does not promote DNA strands exchange. The protein is DNA repair and recombination protein RadB of Methanococcoides burtonii (strain DSM 6242 / NBRC 107633 / OCM 468 / ACE-M).